The following is a 398-amino-acid chain: Ubiquitin-like modifier-activating enzyme 5 (398 aa).

Residues glycine 76, aspartate 97, lysine 120, asparagine 143, and asparagine 177 each contribute to the ATP site. The Zn(2+) site is built by cysteine 219 and cysteine 222. Catalysis depends on cysteine 243, which acts as the Glycyl thioester intermediate. Zn(2+) is bound by residues cysteine 296 and cysteine 301.

Belongs to the ubiquitin-activating E1 family. UBA5 subfamily.

Functionally, E1-like enzyme which activates UFM1. The chain is Ubiquitin-like modifier-activating enzyme 5 from Drosophila grimshawi (Hawaiian fruit fly).